The sequence spans 527 residues: Butyrophilin subfamily 2 member A1 (527 aa).

Positions 1–28 (MESAAALHFSRPASLLLLLLSLCALVSA) are cleaved as a signal peptide. An Ig-like V-type domain is found at 29 to 141 (QFIVVGPTDP…SYDEAILHLV (113 aa)). Residues 29-248 (QFIVVGPTDP…SFMPSVSPCA (220 aa)) lie on the Extracellular side of the membrane. N-linked (GlcNAc...) asparagine glycosylation is found at N46, N114, and N120. C51 and C125 are oxidised to a cystine. Residues 249 to 269 (VALPIIVVILMIPIAVCIYWI) form a helical membrane-spanning segment. Residues 270 to 527 (NKLQKEKKIL…LHRVGTHQSL (258 aa)) are Cytoplasmic-facing. In terms of domain architecture, B30.2/SPRY spans 310-506 (VKEKLQEELR…IFICPALTGA (197 aa)).

This sequence belongs to the immunoglobulin superfamily. BTN/MOG family. As to expression, highly expressed in brain, bone marrow, small intestine, muscle, spleen and pancreas. Moderate expression was seen in lung, liver and kidney.

Its subcellular location is the membrane. The protein is Butyrophilin subfamily 2 member A1 (BTN2A1) of Homo sapiens (Human).